A 108-amino-acid polypeptide reads, in one-letter code: uncharacterized protein (108 aa).

Residues 1–108 form a disordered region; sequence MAKVTSEPQK…DKEQSETSVL (108 aa). The span at 26-56 shows a compositional bias: basic residues; it reads KGRKKGKTPRQRRSRSGVKGLKTTRKAKRPL. Over residues 58–70 the composition is skewed to polar residues; that stretch reads GSSSQKAGETNTP. Residues 73–92 show a composition bias toward basic residues; sequence KPKKARGPILRGRYHRLKEK. The segment covering 93–108 has biased composition (basic and acidic residues); it reads MKKEEADKEQSETSVL.

This is an uncharacterized protein from Homo sapiens (Human).